A 306-amino-acid polypeptide reads, in one-letter code: Pantothenate kinase (306 aa).

91-98 provides a ligand contact to ATP; that stretch reads GSVAVGKS.

The protein belongs to the prokaryotic pantothenate kinase family.

The protein resides in the cytoplasm. The catalysed reaction is (R)-pantothenate + ATP = (R)-4'-phosphopantothenate + ADP + H(+). The protein operates within cofactor biosynthesis; coenzyme A biosynthesis; CoA from (R)-pantothenate: step 1/5. The protein is Pantothenate kinase (coaA) of Streptococcus pneumoniae serotype 4 (strain ATCC BAA-334 / TIGR4).